Reading from the N-terminus, the 213-residue chain is Phosphatidylserine decarboxylase proenzyme (213 aa).

Ser-183 serves as the catalytic Schiff-base intermediate with substrate; via pyruvic acid. Position 183 is a pyruvic acid (Ser); by autocatalysis (Ser-183).

This sequence belongs to the phosphatidylserine decarboxylase family. PSD-A subfamily. In terms of assembly, heterodimer of a large membrane-associated beta subunit and a small pyruvoyl-containing alpha subunit. The cofactor is pyruvate. In terms of processing, is synthesized initially as an inactive proenzyme. Formation of the active enzyme involves a self-maturation process in which the active site pyruvoyl group is generated from an internal serine residue via an autocatalytic post-translational modification. Two non-identical subunits are generated from the proenzyme in this reaction, and the pyruvate is formed at the N-terminus of the alpha chain, which is derived from the carboxyl end of the proenzyme. The post-translation cleavage follows an unusual pathway, termed non-hydrolytic serinolysis, in which the side chain hydroxyl group of the serine supplies its oxygen atom to form the C-terminus of the beta chain, while the remainder of the serine residue undergoes an oxidative deamination to produce ammonia and the pyruvoyl prosthetic group on the alpha chain.

The protein localises to the cell membrane. It catalyses the reaction a 1,2-diacyl-sn-glycero-3-phospho-L-serine + H(+) = a 1,2-diacyl-sn-glycero-3-phosphoethanolamine + CO2. The protein operates within phospholipid metabolism; phosphatidylethanolamine biosynthesis; phosphatidylethanolamine from CDP-diacylglycerol: step 2/2. Its function is as follows. Catalyzes the formation of phosphatidylethanolamine (PtdEtn) from phosphatidylserine (PtdSer). This Syntrophus aciditrophicus (strain SB) protein is Phosphatidylserine decarboxylase proenzyme.